We begin with the raw amino-acid sequence, 275 residues long: Voltage-dependent calcium channel gamma-7 subunit (275 aa).

The next 4 helical transmembrane spans lie at 8–28 (ALTL…GIAV), 103–123 (FPMV…IGHI), 129–149 (ILAF…VVGL), and 179–199 (FAFA…SVYL). Residues Ser222, Ser225, and Ser273 each carry the phosphoserine modification.

The protein belongs to the PMP-22/EMP/MP20 family. CACNG subfamily. Interacts with CACNA1C. Identified in a complex with the L-type calcium channel subunits CACNA1C, CACNA2D1 and either CACNB1 or CACNB2. Acts as an auxiliary subunit for AMPA-selective glutamate receptors (AMPARs), such as GRIA1 and GRIA2. Detected in heart left ventricle. Widely expressed.

The protein localises to the cell membrane. Functionally, regulates the activity of L-type calcium channels that contain CACNA1C as pore-forming subunit. Regulates the trafficking and gating properties of AMPA-selective glutamate receptors (AMPARs). Promotes their targeting to the cell membrane and synapses and modulates their gating properties by slowing their rates of activation, deactivation and desensitization and by mediating their resensitization. Displays subunit-specific AMPA receptor regulation. Shows specificity only for GRIA1 and GRIA2. The protein is Voltage-dependent calcium channel gamma-7 subunit (CACNG7) of Homo sapiens (Human).